A 151-amino-acid polypeptide reads, in one-letter code: Large ribosomal subunit protein uL15 (151 aa).

A disordered region spans residues 1 to 60; the sequence is MAENNPLKIHNLRPAPGAKTAKTRVGRGEASKGKTAGRGTKGTKARYQVPERFEGGQMPL.

This sequence belongs to the universal ribosomal protein uL15 family. Part of the 50S ribosomal subunit.

In terms of biological role, binds to the 23S rRNA. The protein is Large ribosomal subunit protein uL15 of Streptomyces avermitilis (strain ATCC 31267 / DSM 46492 / JCM 5070 / NBRC 14893 / NCIMB 12804 / NRRL 8165 / MA-4680).